The following is a 132-amino-acid chain: Arsenate reductase 1 (132 aa).

Catalysis depends on nucleophile residues C10, C82, and C89. 2 cysteine pairs are disulfide-bonded: C10/C82 and C82/C89.

Belongs to the low molecular weight phosphotyrosine protein phosphatase family. Thioredoxin-coupled ArsC subfamily.

Its subcellular location is the cytoplasm. It carries out the reaction arsenate + [thioredoxin]-dithiol + H(+) = arsenite + [thioredoxin]-disulfide + H2O. Catalyzes the reduction of arsenate [As(V)] to arsenite [As(III)]. This Staphylococcus epidermidis (strain ATCC 35984 / DSM 28319 / BCRC 17069 / CCUG 31568 / BM 3577 / RP62A) protein is Arsenate reductase 1.